The sequence spans 95 residues: Large ribosomal subunit protein bL25 (95 aa).

The protein belongs to the bacterial ribosomal protein bL25 family. In terms of assembly, part of the 50S ribosomal subunit; part of the 5S rRNA/L5/L18/L25 subcomplex. Contacts the 5S rRNA. Binds to the 5S rRNA independently of L5 and L18.

Functionally, this is one of the proteins that binds to the 5S RNA in the ribosome where it forms part of the central protuberance. The protein is Large ribosomal subunit protein bL25 of Shewanella baltica (strain OS223).